Here is a 162-residue protein sequence, read N- to C-terminus: tRNA-specific adenosine deaminase (162 aa).

A CMP/dCMP-type deaminase domain is found at 3-115 (DSDKYFMKCA…KNLQKYICCK (113 aa)). His-54 is a binding site for Zn(2+). Residue Glu-56 is the Proton donor of the active site. Zn(2+)-binding residues include Cys-84 and Cys-87.

The protein belongs to the cytidine and deoxycytidylate deaminase family. In terms of assembly, homodimer. Zn(2+) serves as cofactor.

It catalyses the reaction adenosine(34) in tRNA + H2O + H(+) = inosine(34) in tRNA + NH4(+). Catalyzes the deamination of adenosine to inosine at the wobble position 34 of tRNA(Arg2). The chain is tRNA-specific adenosine deaminase from Buchnera aphidicola subsp. Baizongia pistaciae (strain Bp).